The following is a 753-amino-acid chain: Metal regulatory transcription factor 1 (753 aa).

Residue G2 is modified to N-acetylglycine. A Phosphoserine modification is found at S5. Residues 133-138 carry the Nuclear localization signal motif; it reads KRKEVK. 6 C2H2-type zinc fingers span residues 140-164, 170-194, 200-224, 229-253, 259-283, and 289-313; these read YQCT…QKTH, FVCN…VRVH, FECD…QRLH, FNCE…IRTH, FRCD…VRTH, and FFCP…MKGH. S305 is modified (phosphoserine). 3 disordered regions span residues 308–328, 395–466, and 648–715; these read SHMK…QHNG, ESFN…ALLQ, and SRRK…LSAM. Residues 408 to 417 are compositionally biased toward polar residues; sequence PPSTGNSASL. Pro residues predominate over residues 655-666; the sequence is SPPPPEPSPQAP. A compositionally biased stretch (low complexity) spans 679–698; the sequence is SSAPVPGSSSSTLPSSCEQS. Positions 700 to 712 are enriched in polar residues; that stretch reads QAETPSDPQTETL.

The protein localises to the nucleus. Its subcellular location is the cytoplasm. Its function is as follows. Zinc-dependent transcriptional regulator of cellular adaption to conditions of exposure to heavy metals. Binds to metal responsive elements (MRE) in promoters and activates the transcription of metallothionein genes like metallothionein-2/MT2A. Also regulates the expression of metalloproteases in response to intracellular zinc and functions as a catabolic regulator of cartilages. The sequence is that of Metal regulatory transcription factor 1 (MTF1) from Homo sapiens (Human).